The following is a 204-amino-acid chain: Transcription initiation factor TFIID subunit 11b (204 aa).

Residues 38–60 form a disordered region; that stretch reads PFEAAMEEQEESPVETEQTLEGD. Residues 42–58 show a composition bias toward acidic residues; that stretch reads AMEEQEESPVETEQTLE. A Histone-fold domain is found at 106 to 195; the sequence is FTEEQMSRYE…RRLKLQGKVP (90 aa).

The protein belongs to the TAF11 family. Component of the TFIID complex. TFIID is composed of TATA binding protein (TBP) and a number of TBP-associated factors (TAFs) whose MWs range from 14-217 kDa. Expressed in roots, leaves and inflorescences.

The protein resides in the nucleus. TAFs are components of the transcription factor IID (TFIID) complex that is essential for mediating regulation of RNA polymerase transcription. The chain is Transcription initiation factor TFIID subunit 11b (TAF11B) from Arabidopsis thaliana (Mouse-ear cress).